Consider the following 84-residue polypeptide: LKMGAMFVLLLLFTLASSHREGDIQARKTHLKSDFYRTLPRFARGCTISCGYEDNRCQGECHCPGKTNCYCTSGHHNKGCGCAC.

Residues 1–19 (LKMGAMFVLLLLFTLASSH) form the signal peptide. Residues 20-44 (REGDIQARKTHLKSDFYRTLPRFAR) constitute a propeptide that is removed on maturation.

The protein belongs to the conotoxin S superfamily. In terms of processing, contains 5 disulfide bonds. As to expression, expressed by the venom duct.

Its subcellular location is the secreted. This is Conotoxin Tx8.1 from Conus textile (Cloth-of-gold cone).